Reading from the N-terminus, the 244-residue chain is Glutathione S-transferase theta-2 (244 aa).

The GST N-terminal domain occupies 2 to 82 (GLELYLDLLS…YLSSKYQVAD (81 aa)). Glutathione is bound by residues 40 to 41 (HL), 53 to 54 (KV), 66 to 67 (ES), and 104 to 107 (DNIR). A GST C-terminal domain is found at 88 to 230 (DLQARAQVHE…AKKTLPVPPP (143 aa)).

Belongs to the GST superfamily. Theta family. In terms of assembly, homodimer. In terms of tissue distribution, highest values found in liver followed by testis, adrenal gland, kidney, lung, brain and skeletal muscle. In liver, highest expression found in central vein limiting plate hepatocytes. In lung, expressed mainly in club cells of the bronchiolar epithelium and, at low levels, in type II alveolar cells.

The protein resides in the cytoplasm. Its subcellular location is the cytosol. It localises to the nucleus. The enzyme catalyses RX + glutathione = an S-substituted glutathione + a halide anion + H(+). Its function is as follows. Catalyzes the inactivation of reactive sulfate esters in carcinogenic arylmethanols. Highest activity towards ethacrynic acid and cumene hydroperoxide. The sequence is that of Glutathione S-transferase theta-2 (Gstt2) from Rattus norvegicus (Rat).